Reading from the N-terminus, the 608-residue chain is Dextranase (608 aa).

The N-terminal stretch at M1–I19 is a signal peptide. Positions G20 to H34 are excised as a propeptide. 3 N-linked (GlcNAc...) asparagine glycosylation sites follow: N39, N571, and N574.

It belongs to the glycosyl hydrolase 49 family. Post-translationally, N-glycosylated.

The protein localises to the secreted. The catalysed reaction is Endohydrolysis of (1-&gt;6)-alpha-D-glucosidic linkages in dextran.. The polypeptide is Dextranase (DEX) (Talaromyces minioluteus (Filamentous fungus)).